The chain runs to 343 residues: tRNA N6-adenosine threonylcarbamoyltransferase (343 aa).

Positions 116 and 120 each coordinate Fe cation. Residues 139-143, D172, G185, D189, and N280 each bind substrate; that span reads TVSGG. Residue D308 coordinates Fe cation.

It belongs to the KAE1 / TsaD family. Requires Fe(2+) as cofactor.

The protein resides in the cytoplasm. The enzyme catalyses L-threonylcarbamoyladenylate + adenosine(37) in tRNA = N(6)-L-threonylcarbamoyladenosine(37) in tRNA + AMP + H(+). Required for the formation of a threonylcarbamoyl group on adenosine at position 37 (t(6)A37) in tRNAs that read codons beginning with adenine. Is involved in the transfer of the threonylcarbamoyl moiety of threonylcarbamoyl-AMP (TC-AMP) to the N6 group of A37, together with TsaE and TsaB. TsaD likely plays a direct catalytic role in this reaction. The sequence is that of tRNA N6-adenosine threonylcarbamoyltransferase from Cytophaga hutchinsonii (strain ATCC 33406 / DSM 1761 / CIP 103989 / NBRC 15051 / NCIMB 9469 / D465).